The chain runs to 104 residues: Large ribosomal subunit protein uL24 (104 aa).

The protein belongs to the universal ribosomal protein uL24 family. As to quaternary structure, part of the 50S ribosomal subunit.

Its function is as follows. One of two assembly initiator proteins, it binds directly to the 5'-end of the 23S rRNA, where it nucleates assembly of the 50S subunit. Functionally, one of the proteins that surrounds the polypeptide exit tunnel on the outside of the subunit. The sequence is that of Large ribosomal subunit protein uL24 from Bradyrhizobium sp. (strain BTAi1 / ATCC BAA-1182).